The chain runs to 187 residues: Resolvase OPG149 (187 aa).

It belongs to the RuvC family. Poxviruses-type subfamily. The cofactor is Mg(2+).

Its function is as follows. Plays a role in DNA replication by cleaving viral DNA concatamers to yield unit-length viral genomes. The concatamer junctions contain inverted repeat sequences that can be extruded as cruciforms, yielding Holliday junctions that A22 protein cleaves. The chain is Resolvase OPG149 (OPG149) from Vaccinia virus (strain Western Reserve) (VACV).